Reading from the N-terminus, the 155-residue chain is Small ribosomal subunit protein uS7 (155 aa).

This sequence belongs to the universal ribosomal protein uS7 family. In terms of assembly, part of the 30S ribosomal subunit. Contacts proteins S9 and S11.

One of the primary rRNA binding proteins, it binds directly to 16S rRNA where it nucleates assembly of the head domain of the 30S subunit. Is located at the subunit interface close to the decoding center, probably blocks exit of the E-site tRNA. In Xylella fastidiosa (strain 9a5c), this protein is Small ribosomal subunit protein uS7.